The following is a 207-amino-acid chain: Ribonuclease HII (207 aa).

Residues Q20 to E207 form the RNase H type-2 domain. Positions 26, 27, and 118 each coordinate a divalent metal cation.

It belongs to the RNase HII family. The cofactor is Mn(2+). It depends on Mg(2+) as a cofactor.

It localises to the cytoplasm. It carries out the reaction Endonucleolytic cleavage to 5'-phosphomonoester.. Endonuclease that specifically degrades the RNA of RNA-DNA hybrids. This is Ribonuclease HII from Aliivibrio fischeri (strain ATCC 700601 / ES114) (Vibrio fischeri).